Here is a 231-residue protein sequence, read N- to C-terminus: Large ribosomal subunit protein uL1 (231 aa).

This sequence belongs to the universal ribosomal protein uL1 family. In terms of assembly, part of the 50S ribosomal subunit.

Its function is as follows. Binds directly to 23S rRNA. The L1 stalk is quite mobile in the ribosome, and is involved in E site tRNA release. Protein L1 is also a translational repressor protein, it controls the translation of the L11 operon by binding to its mRNA. This chain is Large ribosomal subunit protein uL1, found in Pseudomonas aeruginosa (strain LESB58).